Reading from the N-terminus, the 887-residue chain is Alpha-amylase 3, chloroplastic (887 aa).

The N-terminal 55 residues, 1–55, are a transit peptide targeting the chloroplast; that stretch reads MSTVPIESLLHHSYLRHNSKVNRGNRSFIPISLNLRSHFTSNKLLHSIGKSVGVS. Cys-499 and Cys-587 are disulfide-bonded. Substrate-binding positions include 545–546 and 664–669; these read YM and RLDFVR. Asp-666 (nucleophile) is an active-site residue. Catalysis depends on Glu-691, which acts as the Proton donor. Substrate-binding positions include Trp-693, Ser-695, Gln-712, Lys-754, 760–762, His-773, Gln-779, Lys-857, and Trp-884; that span reads GWW.

This sequence belongs to the glycosyl hydrolase 13 family. Requires Ca(2+) as cofactor. In terms of tissue distribution, expressed in developing siliques.

It localises to the plastid. The protein resides in the chloroplast. The enzyme catalyses Endohydrolysis of (1-&gt;4)-alpha-D-glucosidic linkages in polysaccharides containing three or more (1-&gt;4)-alpha-linked D-glucose units.. Its activity is regulated as follows. Redox-regulated, with the highest activity under reducing conditions. The midpoint redox potential is -329 mV. The disulfide bridge between Cys-499 and Cys-587 inhibits catalysis. Inhibited by CuCl(2) and H(2)O(2). Its function is as follows. Possesses endoamylolytic activity in vitro, but seems not required for breakdown of transitory starch in leaves. May be involved in the determination of the final structure of glucans by shortening long linear phospho-oligosaccharides in the chloroplast stroma. Can act on both soluble and insoluble glucan substrates to release small linear and branched malto-oligosaccharides. Works synergistically with beta-amylase toward efficient starch degradation. Has activity against p-nitrophenyl maltoheptaoside (BPNP-G7), amylopectin and beta-limit dextrin. Involved in stress-induced starch degradation. The protein is Alpha-amylase 3, chloroplastic of Arabidopsis thaliana (Mouse-ear cress).